Reading from the N-terminus, the 440-residue chain is Beta-1,3-galactosyl-O-glycosyl-glycoprotein beta-1,6-N-acetylglucosaminyltransferase (440 aa).

Residues 1–9 (MKMAGWKKK) are Cytoplasmic-facing. A helical; Signal-anchor for type II membrane protein transmembrane segment spans residues 10-30 (LCPGHHLWALGCYMLLAVVSL). At 31–440 (RLSLRFKCDV…RHKAIYGTEL (410 aa)) the chain is on the lumenal side. 2 N-linked (GlcNAc...) asparagine; by host glycosylation sites follow: asparagine 72 and asparagine 108. 4 cysteine pairs are disulfide-bonded: cysteine 73-cysteine 230, cysteine 164-cysteine 384, cysteine 185-cysteine 212, and cysteine 393-cysteine 425.

It belongs to the glycosyltransferase 14 family.

It is found in the host Golgi apparatus membrane. The catalysed reaction is a 3-O-[beta-D-galactosyl-(1-&gt;3)-N-acetyl-alpha-D-galactosaminyl]-L-seryl-[protein] + UDP-N-acetyl-alpha-D-glucosamine = 3-O-{beta-D-galactosyl-(1-&gt;3)-[N-acetyl-beta-D-glucosaminyl-(1-&gt;6)]-N-acetyl-alpha-D-galactosaminyl}-L-seryl-[protein] + UDP + H(+). The enzyme catalyses a 3-O-[beta-D-galactosyl-(1-&gt;3)-N-acetyl-alpha-D-galactosaminyl]-L-threonyl-[protein] + UDP-N-acetyl-alpha-D-glucosamine = a 3-O-{beta-D-galactosyl-(1-&gt;3)-[N-acetyl-beta-D-glucosaminyl-(1-&gt;6)]-N-acetyl-alpha-D-galactosaminyl}-L-threonyl-[protein] + UDP + H(+). It carries out the reaction a beta-D-Gal-(1-&gt;4)-beta-D-GlcNAc-(1-&gt;3)-beta-D-Gal-(1-&gt;4)-beta-D-GlcNAc derivative + UDP-N-acetyl-alpha-D-glucosamine = a beta-D-Gal-(1-&gt;4)-beta-D-GlcNAc-(1-&gt;3)-[beta-D-GlcNAc-(1-&gt;6)]-beta-D-Gal-(1-&gt;4)-N-acetyl-beta-D-glucosaminyl derivative + UDP + H(+). It catalyses the reaction 3-O-[N-acetyl-beta-D-glucosaminyl-(1-&gt;3)-N-acetyl-alpha-D-galactosaminyl]-L-seryl-[protein] + UDP-N-acetyl-alpha-D-glucosamine = 3-O-[N-acetyl-beta-D-glucosaminyl-(1-&gt;3)-[N-acetyl-beta-D-glucosaminyl-(1-&gt;6)]-N-acetyl-alpha-D-galactosaminyl]-L-seryl-[protein] + UDP + H(+). The catalysed reaction is a 3-O-[N-acetyl-beta-D-glucosaminyl-(1-&gt;3)-N-acetyl-alpha-D-galactosaminyl]-L-threonyl-[protein] + UDP-N-acetyl-alpha-D-glucosamine = 3-O-[N-acetyl-beta-D-glucosaminyl-(1-&gt;3)-[N-acetyl-beta-D-glucosaminyl-(1-&gt;6)]-N-acetyl-alpha-D-galactosaminyl]-L-threonyl-[protein] + UDP + H(+). The protein operates within protein modification; protein glycosylation. Functionally, non-essential glycosyltransferase that can synthesize all known mucin beta 6 N-acetylglucosaminides. Mediates core 2 and core 4 O-glycan branching, 2 important steps in mucin-type biosynthesis. Has also I-branching enzyme activity by converting linear into branched poly-N-acetyllactosaminoglycans. Contributes to the post-translational modifications of structural proteins. The polypeptide is Beta-1,3-galactosyl-O-glycosyl-glycoprotein beta-1,6-N-acetylglucosaminyltransferase (Bo17) (Bovine herpesvirus 4 (strain V. test) (BoHV-4)).